A 3147-amino-acid polypeptide reads, in one-letter code: Probable polyketide synthase 1 (3147 aa).

A Ketosynthase family 3 (KS3) domain is found at 12 to 457 (SSDVAVIGVG…GSNCHLIIQE (446 aa)). Catalysis depends on for beta-ketoacyl synthase activity residues Cys180 and His319. A disordered region spans residues 345-369 (QLNNFSTDGNDNDDDDDDNTSPEPL). Residues 354–364 (NDNDDDDDDNT) are compositionally biased toward acidic residues. His380 acts as the For beta-ketoacyl synthase activity in catalysis. The interval 672 to 705 (GIYPSISVGHSFGEVSSYYLSGIISLETACKIVY) is acyl/malonyl transferase. Ser682 acts as the For acyl/malonyl transferase activity in catalysis. Residues 976-1127 (NRLEGPTTSL…ATISLEQQQP (152 aa)) form an N-terminal hotdog fold region. Positions 976–1298 (NRLEGPTTSL…IKSTNPKSTK (323 aa)) constitute a PKS/mFAS DH domain. Residue His1014 is the Proton acceptor; for dehydratase activity of the active site. The tract at residues 1149 to 1298 (DISKLDKFEL…IKSTNPKSTK (150 aa)) is C-terminal hotdog fold. Asp1209 functions as the Proton donor; for dehydratase activity in the catalytic mechanism. The Carrier domain occupies 2568 to 2645 (SSNISLQDKI…SFLEKVNGLS (78 aa)). At Ser2605 the chain carries O-(pantetheine 4'-phosphoryl)serine. Residues 2723–2747 (PSLSQSDVLKTPPIKSLNNTKNSSL) are disordered. Over residues 2738–2747 (SLNNTKNSSL) the composition is skewed to polar residues. Residues 2789-3147 (VLGIGISVPG…FEGCFLKNVV (359 aa)) form a chalcone synthase region. Residue Cys2930 is part of the active site.

It in the C-terminal section; belongs to the thiolase-like superfamily. Chalcone/stilbene synthases family. Homodimer. Pantetheine 4'-phosphate serves as cofactor.

The enzyme catalyses (E)-4-coumaroyl-CoA + 3 malonyl-CoA + 3 H(+) = 2',4,4',6'-tetrahydroxychalcone + 3 CO2 + 4 CoA. It functions in the pathway secondary metabolite biosynthesis; flavonoid biosynthesis. Functionally, probable polyketide synthase. Produces only acylpyrones; in vitro. This chain is Probable polyketide synthase 1 (stlA), found in Dictyostelium discoideum (Social amoeba).